Consider the following 242-residue polypeptide: uncharacterized protein (242 aa).

This is an uncharacterized protein from Aquifex aeolicus (strain VF5).